The primary structure comprises 430 residues: Aspartate aminotransferase, mitochondrial (430 aa).

The transit peptide at 1–28 directs the protein to the mitochondrion; the sequence is MALAMMIRNAASKRGMTPISGHFGGLRS. Gly65, Trp160, and Asn213 together coordinate L-aspartate. Position 277 is an N6-(pyridoxal phosphate)lysine (Lys277). Arg405 contacts L-aspartate.

It belongs to the class-I pyridoxal-phosphate-dependent aminotransferase family. In terms of assembly, homodimer. It depends on pyridoxal 5'-phosphate as a cofactor.

It localises to the mitochondrion matrix. The catalysed reaction is L-aspartate + 2-oxoglutarate = oxaloacetate + L-glutamate. In terms of biological role, amino acid aminotransferase important for the metabolism of amino acids and Krebs-cycle related organic acids. No activity with D-Asp or D-Ala as amino donors. In plants, it is involved in nitrogen metabolism and in aspects of carbon and energy metabolism. The protein is Aspartate aminotransferase, mitochondrial (ASP1) of Arabidopsis thaliana (Mouse-ear cress).